The primary structure comprises 338 residues: tRNA N6-adenosine threonylcarbamoyltransferase (338 aa).

His-110 and His-114 together coordinate Fe cation. Substrate contacts are provided by residues 132–136 (LLSGG), Asp-165, Gly-178, and Asn-274. Asp-298 is a Fe cation binding site.

The protein belongs to the KAE1 / TsaD family. The cofactor is Fe(2+).

The protein localises to the cytoplasm. The catalysed reaction is L-threonylcarbamoyladenylate + adenosine(37) in tRNA = N(6)-L-threonylcarbamoyladenosine(37) in tRNA + AMP + H(+). In terms of biological role, required for the formation of a threonylcarbamoyl group on adenosine at position 37 (t(6)A37) in tRNAs that read codons beginning with adenine. Is involved in the transfer of the threonylcarbamoyl moiety of threonylcarbamoyl-AMP (TC-AMP) to the N6 group of A37, together with TsaE and TsaB. TsaD likely plays a direct catalytic role in this reaction. This chain is tRNA N6-adenosine threonylcarbamoyltransferase, found in Borrelia garinii subsp. bavariensis (strain ATCC BAA-2496 / DSM 23469 / PBi) (Borreliella bavariensis).